Consider the following 292-residue polypeptide: NAD kinase (292 aa).

Residue Asp73 is the Proton acceptor of the active site. NAD(+) is bound by residues 73–74 (DG), 147–148 (NE), His158, Arg175, Asp177, 188–193 (TGYSLS), and Gln247.

This sequence belongs to the NAD kinase family. The cofactor is a divalent metal cation.

It is found in the cytoplasm. It catalyses the reaction NAD(+) + ATP = ADP + NADP(+) + H(+). In terms of biological role, involved in the regulation of the intracellular balance of NAD and NADP, and is a key enzyme in the biosynthesis of NADP. Catalyzes specifically the phosphorylation on 2'-hydroxyl of the adenosine moiety of NAD to yield NADP. This is NAD kinase from Buchnera aphidicola subsp. Schizaphis graminum (strain Sg).